A 344-amino-acid polypeptide reads, in one-letter code: Cinnamoyl-CoA reductase 1 (344 aa).

S7 bears the Phosphoserine mark. Residues 17–23, R42, K48, 68–69, 88–90, Y161, K165, 188–191, and S203 each bind NADP(+); these read GAGGYIA, DL, TAS, and PVLV. A disulfide bridge connects residues C154 and C162. The active-site Proton donor is K165. The tract at residues 317 to 344 is disordered; that stretch reads QEKGHLAPPPPPPSASQESVENGIKIGS.

It belongs to the NAD(P)-dependent epimerase/dehydratase family. Dihydroflavonol-4-reductase subfamily. Expressed in leaves, stems and flowers.

The catalysed reaction is (E)-cinnamaldehyde + NADP(+) + CoA = (E)-cinnamoyl-CoA + NADPH + H(+). The protein operates within aromatic compound metabolism; phenylpropanoid biosynthesis. Its function is as follows. Involved in the latter stages of lignin biosynthesis. Catalyzes one of the last steps of monolignol biosynthesis, the conversion of cinnamoyl-CoAs into their corresponding cinnamaldehydes. The protein is Cinnamoyl-CoA reductase 1 of Arabidopsis thaliana (Mouse-ear cress).